A 236-amino-acid polypeptide reads, in one-letter code: Phosphoribosylaminoimidazole-succinocarboxamide synthase (236 aa).

The protein belongs to the SAICAR synthetase family.

It carries out the reaction 5-amino-1-(5-phospho-D-ribosyl)imidazole-4-carboxylate + L-aspartate + ATP = (2S)-2-[5-amino-1-(5-phospho-beta-D-ribosyl)imidazole-4-carboxamido]succinate + ADP + phosphate + 2 H(+). Its pathway is purine metabolism; IMP biosynthesis via de novo pathway; 5-amino-1-(5-phospho-D-ribosyl)imidazole-4-carboxamide from 5-amino-1-(5-phospho-D-ribosyl)imidazole-4-carboxylate: step 1/2. The polypeptide is Phosphoribosylaminoimidazole-succinocarboxamide synthase (Campylobacter jejuni subsp. jejuni serotype O:6 (strain 81116 / NCTC 11828)).